The primary structure comprises 703 residues: Probable ATP-dependent RNA helicase DHX35 (703 aa).

The Helicase ATP-binding domain maps to 64-229 (LYLIENYQTV…FNQNETSDPA (166 aa)). An ATP-binding site is contributed by 77-84 (GETGCGKS). A DEAH box motif is present at residues 176-179 (DEAH). A Helicase C-terminal domain is found at 261-438 (TVETVVKIHQ…PVILQLKALG (178 aa)).

This sequence belongs to the DEAD box helicase family. DEAH subfamily. In terms of assembly, identified in the spliceosome C complex.

It catalyses the reaction ATP + H2O = ADP + phosphate + H(+). Its function is as follows. May be involved in pre-mRNA splicing. The protein is Probable ATP-dependent RNA helicase DHX35 (DHX35) of Homo sapiens (Human).